The chain runs to 94 residues: Co-chaperonin GroES (94 aa).

This sequence belongs to the GroES chaperonin family. As to quaternary structure, heptamer of 7 subunits arranged in a ring. Interacts with the chaperonin GroEL.

It is found in the cytoplasm. Functionally, together with the chaperonin GroEL, plays an essential role in assisting protein folding. The GroEL-GroES system forms a nano-cage that allows encapsulation of the non-native substrate proteins and provides a physical environment optimized to promote and accelerate protein folding. GroES binds to the apical surface of the GroEL ring, thereby capping the opening of the GroEL channel. This is Co-chaperonin GroES from Exiguobacterium sp. (strain ATCC BAA-1283 / AT1b).